Reading from the N-terminus, the 157-residue chain is dCTP deaminase (157 aa).

Residues 79 to 84, Asp-95, Gln-124, and Tyr-138 each bind dCTP; that span reads RSSLAR.

Belongs to the dCTP deaminase family. In terms of assembly, homotrimer.

The catalysed reaction is dCTP + H2O + H(+) = dUTP + NH4(+). Its pathway is pyrimidine metabolism; dUMP biosynthesis; dUMP from dCTP (dUTP route): step 1/2. Functionally, catalyzes the deamination of dCTP to dUTP. This is dCTP deaminase from Thermococcus gammatolerans (strain DSM 15229 / JCM 11827 / EJ3).